The sequence spans 430 residues: Ribosomal protein uS12 methylthiotransferase RimO (430 aa).

The MTTase N-terminal domain maps to 1-116; sequence MRVGIKVLGC…IANAIENGTD (116 aa). Residues cysteine 10, cysteine 46, cysteine 79, cysteine 148, cysteine 152, and cysteine 155 each contribute to the [4Fe-4S] cluster site. The Radical SAM core domain maps to 134–365; that stretch reads LEERPYAYVK…LLQAEISNSR (232 aa). Residues 367 to 430 form the TRAM domain; that stretch reads DRFVGKKLKF…DEYDMWGSVI (64 aa).

The protein belongs to the methylthiotransferase family. RimO subfamily. [4Fe-4S] cluster is required as a cofactor.

Its subcellular location is the cytoplasm. The catalysed reaction is L-aspartate(89)-[ribosomal protein uS12]-hydrogen + (sulfur carrier)-SH + AH2 + 2 S-adenosyl-L-methionine = 3-methylsulfanyl-L-aspartate(89)-[ribosomal protein uS12]-hydrogen + (sulfur carrier)-H + 5'-deoxyadenosine + L-methionine + A + S-adenosyl-L-homocysteine + 2 H(+). In terms of biological role, catalyzes the methylthiolation of an aspartic acid residue of ribosomal protein uS12. The chain is Ribosomal protein uS12 methylthiotransferase RimO from Thermotoga petrophila (strain ATCC BAA-488 / DSM 13995 / JCM 10881 / RKU-1).